The sequence spans 954 residues: Glycine dehydrogenase (decarboxylating) (954 aa).

Lys-704 bears the N6-(pyridoxal phosphate)lysine mark.

It belongs to the GcvP family. The glycine cleavage system is composed of four proteins: P, T, L and H. Requires pyridoxal 5'-phosphate as cofactor.

It carries out the reaction N(6)-[(R)-lipoyl]-L-lysyl-[glycine-cleavage complex H protein] + glycine + H(+) = N(6)-[(R)-S(8)-aminomethyldihydrolipoyl]-L-lysyl-[glycine-cleavage complex H protein] + CO2. In terms of biological role, the glycine cleavage system catalyzes the degradation of glycine. The P protein binds the alpha-amino group of glycine through its pyridoxal phosphate cofactor; CO(2) is released and the remaining methylamine moiety is then transferred to the lipoamide cofactor of the H protein. In Rhizobium etli (strain CIAT 652), this protein is Glycine dehydrogenase (decarboxylating).